Reading from the N-terminus, the 330-residue chain is Glycerol-3-phosphate dehydrogenase [NAD(P)+] (330 aa).

Ser-10, Trp-11, Arg-31, and Lys-105 together coordinate NADPH. Sn-glycerol 3-phosphate-binding residues include Lys-105, Gly-135, and Ser-137. Ala-139 contributes to the NADPH binding site. Residues Lys-190, Asp-243, Ser-253, Arg-254, and Asn-255 each contribute to the sn-glycerol 3-phosphate site. The active-site Proton acceptor is the Lys-190. Position 254 (Arg-254) interacts with NADPH. Residues Val-278 and Glu-280 each contribute to the NADPH site.

Belongs to the NAD-dependent glycerol-3-phosphate dehydrogenase family.

The protein localises to the cytoplasm. The catalysed reaction is sn-glycerol 3-phosphate + NAD(+) = dihydroxyacetone phosphate + NADH + H(+). It carries out the reaction sn-glycerol 3-phosphate + NADP(+) = dihydroxyacetone phosphate + NADPH + H(+). Its pathway is membrane lipid metabolism; glycerophospholipid metabolism. In terms of biological role, catalyzes the reduction of the glycolytic intermediate dihydroxyacetone phosphate (DHAP) to sn-glycerol 3-phosphate (G3P), the key precursor for phospholipid synthesis. This Nitratidesulfovibrio vulgaris (strain DP4) (Desulfovibrio vulgaris) protein is Glycerol-3-phosphate dehydrogenase [NAD(P)+].